Reading from the N-terminus, the 95-residue chain is Co-chaperonin GroES (95 aa).

This sequence belongs to the GroES chaperonin family. In terms of assembly, heptamer of 7 subunits arranged in a ring. Interacts with the chaperonin GroEL.

The protein localises to the cytoplasm. Functionally, together with the chaperonin GroEL, plays an essential role in assisting protein folding. The GroEL-GroES system forms a nano-cage that allows encapsulation of the non-native substrate proteins and provides a physical environment optimized to promote and accelerate protein folding. GroES binds to the apical surface of the GroEL ring, thereby capping the opening of the GroEL channel. In Streptococcus thermophilus (strain ATCC BAA-491 / LMD-9), this protein is Co-chaperonin GroES.